The chain runs to 403 residues: Succinoglycan biosynthesis protein ExoL (403 aa).

It is found in the cytoplasm. It participates in glycan metabolism; exopolysaccharide biosynthesis. Functionally, essential for succinoglycan (EPS I) synthesis and nodule infection. Glycosyltransferase needed for the addition of the third sugar (glucose), catalyzes the formation of a beta-1,4 linkage between the second and third sugars. The sequence is that of Succinoglycan biosynthesis protein ExoL (exoL) from Rhizobium meliloti (strain 1021) (Ensifer meliloti).